A 669-amino-acid chain; its full sequence is MTVTYSSKVANATFFGFHRLLLKWRGSIYKLLYREFIVFAVLYTAISLVYRLLLTGAQKRYFEKLSIYCDRYAEQIPVTFVLGFYVTLVVNRWWNQFVNLPWPDRLMLLISSSVHGSDQHGRLLRRTLMRYVNLTSLLIFRSVSTAVYKRFPTMDHVVEAGFMTADERKLFDHLKSPHLKYWVPFIWFGNLATKARNEGRIRDSVDLQSLMTEMNRYRSWCSLLFGYDWVGIPLVYTQVVTLAVYTFFFACLIGRQFLDPTKGYVGHDLDLYVPIFTLLQFFFYAGWLKVAEQLINPFGEDDDDFETNWCIDRNLQVSLLAVDEMHMSLPKMKKDIYWDDSAARPPYTLAAADYCIPSFLGSTIQMGLSGSNFPAEDWLWNYEKHGNRHSVMRRVKRFLSTHEHPGSPRRRRSFGRQASDSSMFLPPSPARDLLDVPSRNPHRGSPTRKQSRSQEGSPKLHSSMGELSTIRETSRTSTLQSLSPQSSVRSSPTKMPQVPEVLITAAEAPAFSADSHQHDSTTSILSLEFTGVQPSGTEQQVEPSGTPPGDPNPQTTSASTERDLFKFEEDLEDDRFPKRWSLPEFLESRHTSLGNLGPDPVSPRDALLLPDTETPSETNGIHPGAGSALAPDILYLMESLDKETDILEFNNEHTGESPKGTPQRPRTWF.

The Cytoplasmic segment spans residues 1-31 (MTVTYSSKVANATFFGFHRLLLKWRGSIYKL). A10 contacts Ca(2+). The helical transmembrane segment at 32 to 51 (LYREFIVFAVLYTAISLVYR) threads the bilayer. Over 52–60 (LLLTGAQKR) the chain is Extracellular. A helical transmembrane segment spans residues 61–82 (YFEKLSIYCDRYAEQIPVTFVL). At 83 to 237 (GFYVTLVVNR…DWVGIPLVYT (155 aa)) the chain is on the cytoplasmic side. A helical transmembrane segment spans residues 238-255 (QVVTLAVYTFFFACLIGR). Residues 256-274 (QFLDPTKGYVGHDLDLYVP) lie on the Extracellular side of the membrane. Residues 275-288 (IFTLLQFFFYAGWL) traverse the membrane as a helical segment. The Cytoplasmic portion of the chain corresponds to 289 to 669 (KVAEQLINPF…GTPQRPRTWF (381 aa)). Q293, N296, D301, and D304 together coordinate Ca(2+). Disordered stretches follow at residues 399-496 (LSTH…TKMP), 533-560 (QPSGTEQQVEPSGTPPGDPNPQTTSAST), 591-627 (TSLGNLGPDPVSPRDALLLPDTETPSETNGIHPGAGS), and 646-669 (ILEFNNEHTGESPKGTPQRPRTWF). A compositionally biased stretch (basic residues) spans 440–451 (NPHRGSPTRKQS). Low complexity predominate over residues 475 to 492 (RTSTLQSLSPQSSVRSSP). A compositionally biased stretch (polar residues) spans 533-543 (QPSGTEQQVEP). Over residues 646 to 656 (ILEFNNEHTGE) the composition is skewed to basic and acidic residues.

Belongs to the anion channel-forming bestrophin (TC 1.A.46) family. Calcium-sensitive chloride channel subfamily. In terms of tissue distribution, expressed in heart. Expressed in brain, retina/retinal pigment epithelium (RPE) and skeletal muscle. Expressed in acinar cells of parotid glands. Expressed in lung, kidney and testis.

The protein localises to the cell membrane. It carries out the reaction chloride(in) = chloride(out). Its function is as follows. Ligand-gated anion channel that allows the movement of chloride monoatomic anions across cell membranes when activated by calcium (Ca2+). In terms of biological role, does not function as calcium-gated chloride channel. The sequence is that of Bestrophin-3 (Best3) from Mus musculus (Mouse).